Consider the following 93-residue polypeptide: Small ribosomal subunit protein bS18 (93 aa).

Over residues 1-11 (MAPSARNRKPG) the composition is skewed to basic residues. The disordered stretch occupies residues 1–27 (MAPSARNRKPGARSMAKAAALRKPKKK).

This sequence belongs to the bacterial ribosomal protein bS18 family. In terms of assembly, part of the 30S ribosomal subunit. Forms a tight heterodimer with protein bS6.

Functionally, binds as a heterodimer with protein bS6 to the central domain of the 16S rRNA, where it helps stabilize the platform of the 30S subunit. The polypeptide is Small ribosomal subunit protein bS18 (Salinispora tropica (strain ATCC BAA-916 / DSM 44818 / JCM 13857 / NBRC 105044 / CNB-440)).